Here is a 916-residue protein sequence, read N- to C-terminus: Translation initiation factor IF-2 (916 aa).

Residues 151 to 191 (NLDEQQRLAESDRARDEAIQRKRDEEQAAKDRVEAERKAAE) are compositionally biased toward basic and acidic residues. 2 disordered regions span residues 151–262 (NLDE…SHVM) and 280–328 (HLSA…ERPT). Low complexity-rich tracts occupy residues 192–243 (EAAA…ATPA) and 293–305 (RGKP…SSSS). Positions 415–584 (SRPPVVTIMG…SLQAEVLELK (170 aa)) constitute a tr-type G domain. Positions 424–431 (GHVDHGKT) are G1. Position 424–431 (424–431 (GHVDHGKT)) interacts with GTP. The tract at residues 449–453 (GITQH) is G2. The tract at residues 470–473 (DTPG) is G3. Residues 470 to 474 (DTPGH) and 524 to 527 (NKID) each bind GTP. The segment at 524–527 (NKID) is G4. The tract at residues 560–562 (SAK) is G5.

This sequence belongs to the TRAFAC class translation factor GTPase superfamily. Classic translation factor GTPase family. IF-2 subfamily.

Its subcellular location is the cytoplasm. One of the essential components for the initiation of protein synthesis. Protects formylmethionyl-tRNA from spontaneous hydrolysis and promotes its binding to the 30S ribosomal subunits. Also involved in the hydrolysis of GTP during the formation of the 70S ribosomal complex. This Xanthomonas campestris pv. campestris (strain B100) protein is Translation initiation factor IF-2.